A 396-amino-acid polypeptide reads, in one-letter code: NADH-quinone oxidoreductase subunit D (396 aa).

This sequence belongs to the complex I 49 kDa subunit family. In terms of assembly, NDH-1 is composed of 14 different subunits. Subunits NuoB, C, D, E, F, and G constitute the peripheral sector of the complex.

Its subcellular location is the cell inner membrane. It catalyses the reaction a quinone + NADH + 5 H(+)(in) = a quinol + NAD(+) + 4 H(+)(out). Functionally, NDH-1 shuttles electrons from NADH, via FMN and iron-sulfur (Fe-S) centers, to quinones in the respiratory chain. The immediate electron acceptor for the enzyme in this species is believed to be ubiquinone. Couples the redox reaction to proton translocation (for every two electrons transferred, four hydrogen ions are translocated across the cytoplasmic membrane), and thus conserves the redox energy in a proton gradient. The polypeptide is NADH-quinone oxidoreductase subunit D (Rhodopseudomonas palustris (strain BisA53)).